A 126-amino-acid polypeptide reads, in one-letter code: Small ribosomal subunit protein uS11 (126 aa).

Belongs to the universal ribosomal protein uS11 family. Part of the 30S ribosomal subunit.

Its function is as follows. Located on the platform of the 30S subunit. The protein is Small ribosomal subunit protein uS11 of Methanosarcina barkeri (strain Fusaro / DSM 804).